A 402-amino-acid chain; its full sequence is Flavohemoprotein (402 aa).

The region spanning 1-138 (MLSPEVRALV…LADLLIGRER (138 aa)) is the Globin domain. Residue His-85 coordinates heme b. Catalysis depends on charge relay system residues Tyr-95 and Glu-137. The tract at residues 149 to 402 (GGWTGWRAFK…AEVFGTGGVA (254 aa)) is reductase. Residues 152 to 261 (TGWRAFKVVR…SPPQGDFTLD (110 aa)) enclose the FAD-binding FR-type domain. Residues Tyr-190 and 206 to 209 (RQYS) contribute to the FAD site. Position 274–279 (274–279 (GVGLTP)) interacts with NADP(+). 395–398 (VFGT) serves as a coordination point for FAD.

It belongs to the globin family. Two-domain flavohemoproteins subfamily. This sequence in the C-terminal section; belongs to the flavoprotein pyridine nucleotide cytochrome reductase family. Heme b serves as cofactor. Requires FAD as cofactor.

The enzyme catalyses 2 nitric oxide + NADPH + 2 O2 = 2 nitrate + NADP(+) + H(+). The catalysed reaction is 2 nitric oxide + NADH + 2 O2 = 2 nitrate + NAD(+) + H(+). Functionally, is involved in NO detoxification in an aerobic process, termed nitric oxide dioxygenase (NOD) reaction that utilizes O(2) and NAD(P)H to convert NO to nitrate, which protects the bacterium from various noxious nitrogen compounds. Therefore, plays a central role in the inducible response to nitrosative stress. The sequence is that of Flavohemoprotein from Bordetella pertussis (strain Tohama I / ATCC BAA-589 / NCTC 13251).